The sequence spans 406 residues: Exodeoxyribonuclease 7 large subunit (406 aa).

It belongs to the XseA family. In terms of assembly, heterooligomer composed of large and small subunits.

The protein resides in the cytoplasm. The enzyme catalyses Exonucleolytic cleavage in either 5'- to 3'- or 3'- to 5'-direction to yield nucleoside 5'-phosphates.. Functionally, bidirectionally degrades single-stranded DNA into large acid-insoluble oligonucleotides, which are then degraded further into small acid-soluble oligonucleotides. The chain is Exodeoxyribonuclease 7 large subunit from Desulfitobacterium hafniense (strain Y51).